Here is a 132-residue protein sequence, read N- to C-terminus: Small ribosomal subunit protein uS8 (132 aa).

It belongs to the universal ribosomal protein uS8 family. Part of the 30S ribosomal subunit. Contacts proteins S5 and S12.

In terms of biological role, one of the primary rRNA binding proteins, it binds directly to 16S rRNA central domain where it helps coordinate assembly of the platform of the 30S subunit. This is Small ribosomal subunit protein uS8 from Clostridium tetani (strain Massachusetts / E88).